The primary structure comprises 327 residues: tRNA-modifying protein YgfZ (327 aa).

Folate contacts are provided by tryptophan 27 and tryptophan 189.

The protein belongs to the tRNA-modifying YgfZ family.

The protein localises to the cytoplasm. Functionally, folate-binding protein involved in regulating the level of ATP-DnaA and in the modification of some tRNAs. It is probably a key factor in regulatory networks that act via tRNA modification, such as initiation of chromosomal replication. The polypeptide is tRNA-modifying protein YgfZ (Klebsiella pneumoniae (strain 342)).